The primary structure comprises 3174 residues: MVFESVVVDVLNRFLGDYVVDLDTSQLSLGIWKGAVALKNLQIKENALSQLDVPFKVKVGHIGNLKLIIPWKNLYTQPVEAVLEEIYLLIVPSSRIKYDPLKEEKQLMEAKQQELKRIEEAKQKVVDQEQHLPEKQDTFAEKLVTQIIKNLQVKISSIHIRYEDDITNRDKPLSFGISLQNLSMQTTDQYWVPCLHDETEKLVRKLIRLDNLFAYWNVKSQMFYLSDYDNSLDDLKNGIVNENIVPEGYDFVFRPISANAKLVMNRRSDFDFSAPKINLEIELHNIAIEFNKPQYFSIMELLESVDMMAQNLPYRKFKPDVPLHHHAREWWAYAIHGVLEVNVCPRLWMWSWKHIRKHRQKVKQYKELYKKKLTSKKPPGELLVSLEELEKTLDVFNITIARQTAEVEVKKAGYKIYKEGVKDPEDNKGWFSWLWSWSEQNTNEQQPDVQPETLEEMLTPEEKALLYEAIGYSETAVDPTLLKTFEALKFFVHLKSMSIVLRENHQKPELVDIVIEEFSTLIVQRPGAQAIKFETKIDSFHITGLPDNSEKPRLLSSLDDAMSLFQITFEINPLDETVSQRCIIEAEPLEIIYDARTVNSIVEFFRPPKEVHLAQLTAATLTKLEEFRSKTATGLLYIIETQKVLDLKINLKASYIIVPQDGIFSPTSNLLLLDLGHLKVTSKSRSELPDVKQGEANLKEIMDRAYDSFDIQLTSVQLLYSRVGDNWREARKLSVSTQHILVPMHFNLELSKAMVFMDVRMPKFKIYGKLPLISLRISDKKLQGIMELIESIPKPEPVTEVSAPVKSFQIQTSTSLGTSQISQKIIPLLELPSVSEDDSEEEFFDAPCSPLEEPLQFPTGVKSIRTRKLQKQDCSVNMTTFKIRFEVPKVLIEFYHLVGDCELSVVEILVLGLGAEIEIRTYDLKANAFLKEFCLKCPEYLDENKKPVYLVTTLDNTMEDLLTLEYVKAEKNVPDLKSTYNNVLQLIKVNFSSLDIHLHTEALLNTINYLHNILPQSEEKSAPVSTTETEDKGDVIKKLALKLSTNEDIITLQILAELSCLQIFIQDQKCNISEIKIEGLDSEMIMRPSETEINAKLRNIIVLDSDITAIYKKAVYITGKEVFSFKMVSYMDATAGSAYTDMNVVDIQVNLIVGCIEVVFVTKFLYSILAFIDNFQAAKQALAEATVQAAGMAATGVKELAQRSSRMALDINIKAPVVVIPQSPVSENVFVADFGLITMTNTFHMITESQSSPPPVIDLITIKLSEMRLYRSRFINDAYQEVLDLLLPLNLEVVVERNLCWEWYQEVPCFNVNAQLKPMEFILSQEDITTIFKTLHGNIWYEKDGSASPAVTKDQYSATSGVTTNASHHSGGATVVTAAVVEVHSRALLVKTTLNISFKTDDLTMVLYSPGPKQASFTDVRDPSLKLAEFKLENIISTLKMYTDGSTFSSFSLKNCILDDKRPHVKKATPRMIGLTVGFDKKDMMDIKYRKVRDGCVTDAVFQEMYICASVEFLQTVANVFLEAYTTGTAVETSVQTWTAKEEVPTQESVKWEINVIIKNPEIVFVADMTKNDAPALVITTQCEICYKGNLENSTMTAAIKDLQVRACPFLPVKRKGKITTVLQPCDLFYQTTQKGTDPQVIDMSVKSLTLKVSPVIINTMITITSALYTTKETIPEETASSTAHLWEKKDTKTLKMWFLEESNETEKIAPTTELVPKGEMIKMNIDSIFIVLEAGIGHRTVPMLLAKSRFSGEGKNWSSLINLHCQLELEVHYYNEMFGVWEPLLEPLEIDQTEDFRPWNLGIKMKKKAKMAIVESDPEEENYKVPEYKTVISFHSKDQLNITLSKCGLVMLNNLVKAFTEAATGSSADFVKDLAPFMILNSLGLTISVSPSDSFSVLNIPMAKSYVLKNGESLSMDYIRTKDNDHFNAMTSLSSKLFFILLTPVNHSTADKIPLTKVGRRLYTVRHRESGVERSIVCQIDTVEGSKKVTIRSPVQIRNHFSVPLSVYEGDTLLGTASPENEFNIPLGSYRSFIFLKPEDENYQMCEGIDFEEIIKNDGALLKKKCRSKNPSKESFLINIVPEKDNLTSLSVYSEDGWDLPYIMHLWPPILLRNLLPYKIAYYIEGIENSVFTLSEGHSAQICTAQLGKARLHLKLLDYLNHDWKSEYHIKPNQQDISFVSFTCVTEMEKTDLDIAVHMTYNTGQTVVAFHSPYWMVNKTGRMLQYKADGIHRKHPPNYKKPVLFSFQPNHFFNNNKVQLMVTDSELSNQFSIDTVGSHGAVKCKGLKMDYQVGVTIDLSSFNITRIVTFTPFYMIKNKSKYHISVAEEGNDKWLSLDLEQCIPFWPEYASSKLLIQVERSEDPPKRIYFNKQENCILLRLDNELGGIIAEVNLAEHSTVITFLDYHDGAATFLLINHTKNELVQYNQSSLSEIEDSLPPGKAVFYTWADPVGSRRLKWRCRKSHGEVTQKDDMMMPIDLGEKTIYLVSFFEGLQRIILFTEDPRVFKVTYESEKAELAEQEIAVALQDVGISLVNNYTKQEVAYIGITSSDVVWETKPKKKARWKPMSVKHTEKLEREFKEYTESSPSEDKVIQLDTNVPVRLTPTGHNMKILQPHVIALRRNYLPALKVEYNTSAHQSSFRIQIYRIQIQNQIHGAVFPFVFYPVKPPKSVTMDSAPKPFTDVSIVMRSAGHSQISRIKYFKVLIQEMDLRLDLGFIYALTDLMTEAEVTENTEVELFHKDIEAFKEEYKTASLVDQSQVSLYEYFHISPIKLHLSVSLSSGREEAKDSKQNGGLIPVHSLNLLLKSIGATLTDVQDVVFKLAFFELNYQFHTTSDLQSEVIRHYSKQAIKQMYVLILGLDVLGNPFGLIREFSEGVEAFFYEPYQGAIQGPEEFVEGMALGLKALVGGAVGGLAGAASKITGAMAKGVAAMTMDEDYQQKRREAMNKQPAGFREGITRGGKGLVSGFVSGITGIVTKPIKGAQKGGAAGFFKGVGKGLVGAVARPTGGIIDMASSTFQGIKRATETSEVESLRPPRFFNEDGVIRPYRLRDGTGNQMLQVMENGRFAKYKYFTHVMINKTDMLMITRRGVLFVTKGTFGQLTCEWQYSFDEFTKEPFIVHGRRLRIEAKERVKSVFHAREFGKIINFKTPEDARWILTKLQEAREPSPSL.

Positions 3 to 116 constitute a Chorein N-terminal domain; that stretch reads FESVVVDVLN…LMEAKQQELK (114 aa). 3 TPR repeats span residues 212–245, 373–406, and 537–575; these read LFAY…ENIV, LTSK…QTAE, and IDSF…NPLD. A Phosphoserine modification is found at serine 839. The FFAT signature appears at 842-848; the sequence is EFFDAPC. TPR repeat units lie at residues 1256 to 1289 and 1291 to 1320; these read VIDL…LLPL and LEVV…KPME. Residue serine 1416 is modified to Phosphoserine. The TPR 6 repeat unit spans residues 2009–2041; the sequence is YEGDTLLGTASPENEFNIPLGSYRSFIFLKPED. The 246-residue stretch at 2209–2454 folds into the SHR-BD domain; sequence VAFHSPYWMV…VFYTWADPVG (246 aa). 3 TPR repeats span residues 2568–2601, 2717–2751, and 2860–2898; these read PMSV…DTNV, LGFI…FKEE, and ILGL…PEEF. The required for mitochondrial localization stretch occupies residues 2751–3174; that stretch reads EYKTASLVDQ…QEAREPSPSL (424 aa). Positions 2953 to 3027 are required for lipid droplet localization; the sequence is PAGFREGITR…SSTFQGIKRA (75 aa). A TPR 10 repeat occupies 3086–3119; sequence MLMITRRGVLFVTKGTFGQLTCEWQYSFDEFTKE.

This sequence belongs to the VPS13 family. As to quaternary structure, interacts (via FFAT motif) with VAPA and VAPB. Interacts with RAB7A. Interacts with XK. Expressed in red blood cells (at protein level). Widely expressed, with high expression in brain, heart, skeletal muscle and kidney.

The protein localises to the mitochondrion outer membrane. It is found in the endoplasmic reticulum membrane. The protein resides in the endosome membrane. Its subcellular location is the lysosome membrane. It localises to the lipid droplet. The protein localises to the golgi apparatus. It is found in the cytoplasmic vesicle. The protein resides in the secretory vesicle. Its subcellular location is the neuronal dense core vesicle. Mediates the transfer of lipids between membranes at organelle contact sites. Binds phospholipids. Required for the formation or stabilization of ER-mitochondria contact sites which enable transfer of lipids between the ER and mitochondria. Negatively regulates lipid droplet size and motility. Required for efficient lysosomal protein degradation. The polypeptide is Intermembrane lipid transfer protein VPS13A (VPS13A) (Homo sapiens (Human)).